The primary structure comprises 315 residues: Methionyl-tRNA formyltransferase (315 aa).

113 to 116 is a (6S)-5,6,7,8-tetrahydrofolate binding site; sequence SLLP.

It belongs to the Fmt family.

The enzyme catalyses L-methionyl-tRNA(fMet) + (6R)-10-formyltetrahydrofolate = N-formyl-L-methionyl-tRNA(fMet) + (6S)-5,6,7,8-tetrahydrofolate + H(+). Functionally, attaches a formyl group to the free amino group of methionyl-tRNA(fMet). The formyl group appears to play a dual role in the initiator identity of N-formylmethionyl-tRNA by promoting its recognition by IF2 and preventing the misappropriation of this tRNA by the elongation apparatus. The chain is Methionyl-tRNA formyltransferase from Yersinia enterocolitica serotype O:8 / biotype 1B (strain NCTC 13174 / 8081).